Reading from the N-terminus, the 274-residue chain is MTQQLQNIIDTAWENRASLSPSAAPREVQDAVEHVIAELDAGKLRVATREGVGQWTVHQWIKKAVLLSFRLKDNELIEAGSLGFYDKVPTKFAGRSAAEMAATGVRVVPPAVARRGSFIAKGAILMPSYVNIGAYVDEGTMVDTWATVGSCAQVGKHVHLSGGVGLGGVLEPLQANPTIIEDNCFIGARSEIVEGVIVEENSVISMGVYIGQSTPIYDRATDTVSYGRVPAGSVVVSGSLPKGDGKYSMYAAIIVKKVDAKTRSTTSLNDLLRD.

Positions 106 and 143 each coordinate substrate.

The protein belongs to the transferase hexapeptide repeat family. Homotrimer.

It localises to the cytoplasm. The catalysed reaction is (S)-2,3,4,5-tetrahydrodipicolinate + succinyl-CoA + H2O = (S)-2-succinylamino-6-oxoheptanedioate + CoA. It functions in the pathway amino-acid biosynthesis; L-lysine biosynthesis via DAP pathway; LL-2,6-diaminopimelate from (S)-tetrahydrodipicolinate (succinylase route): step 1/3. The sequence is that of 2,3,4,5-tetrahydropyridine-2,6-dicarboxylate N-succinyltransferase from Paracidovorax citrulli (strain AAC00-1) (Acidovorax citrulli).